A 578-amino-acid chain; its full sequence is PTS system fructose-specific EIIB'BC component (578 aa).

2 consecutive PTS EIIB type-2 domains span residues 1–99 (MSKI…EALA) and 119–214 (VVAI…AALA). C125 (phosphocysteine intermediate; for EIIB activity) is an active-site residue. Position 125 is a phosphocysteine; by EIIA (C125). One can recognise a PTS EIIC type-2 domain in the interval 241 to 576 (PYMHLLTGVS…KKPIPAEERA (336 aa)). Helical transmembrane passes span 251 to 271 (YMLPLVVAGGLLIALSFVFGI), 284 to 304 (LMAIGGGAAFKLMVPVLAGFI), 319 to 339 (IGGMLAVNLNAGFLGGIVAGF), 364 to 384 (VLILPLLSTAITGLIMVYVVG), 405 to 425 (NAVVLGLILGGMMAVDMGGPI), 428 to 450 (AAYTFAVGLLTSSTYAPMAAVMA), 477 to 497 (AGGAAAVLGLSFITEGAIPFA), 518 to 538 (LSMALGCLLVAPHGGIFVLAI), and 545 to 565 (LGLYALSIVVGTLVTTGLLIA).

The protein resides in the cell inner membrane. It catalyses the reaction D-fructose(out) + N(pros)-phospho-L-histidyl-[protein] = D-fructose 1-phosphate(in) + L-histidyl-[protein]. The phosphoenolpyruvate-dependent sugar phosphotransferase system (sugar PTS), a major carbohydrate active transport system, catalyzes the phosphorylation of incoming sugar substrates concomitantly with their translocation across the cell membrane. The enzyme II FruAB PTS system is involved in fructose transport. This Rhodobacter capsulatus (Rhodopseudomonas capsulata) protein is PTS system fructose-specific EIIB'BC component.